A 78-amino-acid chain; its full sequence is Large ribosomal subunit protein bL28 (78 aa).

Residues 1-21 (MARVCQVTGKGPMTGNNVSHA) are disordered.

It belongs to the bacterial ribosomal protein bL28 family.

This chain is Large ribosomal subunit protein bL28, found in Bordetella petrii (strain ATCC BAA-461 / DSM 12804 / CCUG 43448).